Reading from the N-terminus, the 129-residue chain is Small ribosomal subunit protein uS9 (129 aa).

It belongs to the universal ribosomal protein uS9 family.

This Gemmatimonas aurantiaca (strain DSM 14586 / JCM 11422 / NBRC 100505 / T-27) protein is Small ribosomal subunit protein uS9.